Reading from the N-terminus, the 963-residue chain is MADLAECNIKVMCRFRPLNESEVNRGDKYIAKFQGEDTVVIASKPYAFDRVFQSSTSQEQVYNDCAKKIVKDVLEGYNGTIFAYGQTSSGKTHTMEGKLHDPEGMGIIPRIVQDIFNYIYSMDENLEFHIKVSYFEIYLDKIRDLLDVSKTNLSVHEDKNRVPYVKGCTERFVCSPDEVMDTIDEGKSNRHVAVTNMNEHSSRSHSIFLINVKQENTQTEQKLSGKLYLVDLAGSEKVSKTGAEGAVLDEAKNINKSLSALGNVISALAEGSTYVPYRDSKMTRILQDSLGGNCRTTIVICCSPSSYNESETKSTLLFGQRAKTIKNTVCVNVELTAEQWKKKYEKEKEKNKILRNTIQWLENELNRWRNGETVPIDEQFDKEKANLEAFTVDKDITLTNDKPATAIGVIGNFTDAERRKCEEEIAKLYKQLDDKDEEINQQSQLVEKLKTQMLDQEELLASTRRDQDNMQAELNRLQAENDASKEEVKEVLQALEELAVNYDQKSQEVEDKTKEYELLSDELNQKSATLASIDAELQKLKEMTNHQKKRAAEMMASLLKDLAEIGIAVGNNDVKQPEGTGMIDEEFTVARLYISKMKSEVKTMVKRCKQLESTQTESNKKMEENEKELAACQLRISQHEAKIKSLTEYLQNVEQKKRQLEESVDALSEELVQLRAQEKVHEMEKEHLNKVQTANEVKQAVEQQIQSHRETHQKQISSLRDEVEAKAKLITDLQDQNQKMMLEQERLRVEHEKLKATDQEKSRKLHELTVMQDRREQARQDLKGLEETVAKELQTLHNLRKLFVQDLATRVKKSAEIDSDDTGGSAAQKQKISFLENNLEQLTKVHKQLVRDNADLRCELPKLEKRLRATAERVKALESALKEAKENASRDRKRYQQEVDRIKEAVRSKNMARRGHSAQIAKPIRPGQHPAASPTHPSAIRGGGAFVQNSQPVAVRGGGGKQV.

An N-acetylalanine modification is found at A2. A Kinesin motor domain is found at 8 to 325; the sequence is NIKVMCRFRP…LLFGQRAKTI (318 aa). 85-92 is a binding site for ATP; the sequence is GQTSSGKT. K213 is covalently cross-linked (Glycyl lysine isopeptide (Lys-Gly) (interchain with G-Cter in SUMO2)). Residues 329-914 adopt a coiled-coil conformation; sequence VCVNVELTAE…AVRSKNMARR (586 aa). The tract at residues 908-963 is disordered; that stretch reads SKNMARRGHSAQIAKPIRPGQHPAASPTHPSAIRGGGAFVQNSQPVAVRGGGGKQV. A globular region spans residues 915-963; the sequence is GHSAQIAKPIRPGQHPAASPTHPSAIRGGGAFVQNSQPVAVRGGGGKQV. The residue at position 933 (S933) is a Phosphoserine. R956 bears the Omega-N-methylarginine mark.

It belongs to the TRAFAC class myosin-kinesin ATPase superfamily. Kinesin family. Kinesin subfamily. As to quaternary structure, oligomer composed of two heavy chains and two light chains. Interacts with GRIP1 and PPP1R42. Interacts with SYBU. Interacts with JAKMIP1. Interacts with PLEKHM2. Interacts with ECPAS. Interacts with ZFYVE27. Found in a complex with OGT, RHOT1, RHOT2 and TRAK1. Interacts with APP (via cytoplasmic domain).

It localises to the cytoplasm. The protein localises to the cytoskeleton. It is found in the cytolytic granule membrane. Its subcellular location is the lysosome membrane. Functionally, microtubule-dependent motor required for normal distribution of mitochondria and lysosomes. Can induce formation of neurite-like membrane protrusions in non-neuronal cells in a ZFYVE27-dependent manner. Regulates centrosome and nuclear positioning during mitotic entry. During the G2 phase of the cell cycle in a BICD2-dependent manner, antagonizes dynein function and drives the separation of nuclei and centrosomes. Required for anterograde axonal transportation of MAPK8IP3/JIP3 which is essential for MAPK8IP3/JIP3 function in axon elongation. Through binding with PLEKHM2 and ARL8B, directs lysosome movement toward microtubule plus ends. Involved in NK cell-mediated cytotoxicity. Drives the polarization of cytolytic granules and microtubule-organizing centers (MTOCs) toward the immune synapse between effector NK lymphocytes and target cells. This chain is Kinesin-1 heavy chain, found in Homo sapiens (Human).